Here is a 696-residue protein sequence, read N- to C-terminus: Elongation factor G (696 aa).

The 281-residue stretch at 10–290 (THFRNIGIAA…AVVDYLPSPL (281 aa)) folds into the tr-type G domain. GTP contacts are provided by residues 19–26 (AHIDAGKT), 89–93 (DTPGH), and 143–146 (NKMD).

Belongs to the TRAFAC class translation factor GTPase superfamily. Classic translation factor GTPase family. EF-G/EF-2 subfamily.

Its subcellular location is the cytoplasm. Its function is as follows. Catalyzes the GTP-dependent ribosomal translocation step during translation elongation. During this step, the ribosome changes from the pre-translocational (PRE) to the post-translocational (POST) state as the newly formed A-site-bound peptidyl-tRNA and P-site-bound deacylated tRNA move to the P and E sites, respectively. Catalyzes the coordinated movement of the two tRNA molecules, the mRNA and conformational changes in the ribosome. This chain is Elongation factor G, found in Deinococcus geothermalis (strain DSM 11300 / CIP 105573 / AG-3a).